The chain runs to 346 residues: MSEAARLIAPEKRGEDLDATMRPQTLDEFTGQAEARANLKIFIEAARNRGEALDHVLFVGPPGLGKTTLAQIMAKELGVNFRSTSGPVIAKAGDLAALLTNLEERDVLFIDEIHRLNPAVEEILYPAMEDFQLDLIIGEGPAARSVKIDLAKFTLVAATTRLGLLTTPLRDRFGIPVRLNFYTVEELELIVRRGARLMGLGMTDEGAREIARRARGTPRIAGRLLRRVRDFAEVARAEAVTLKIADEALTRLLVDSMGLDQLDRRYLTMIAQNFGGGPVGIETIAAGLSEPRDAIEDIIEPYLIQQGFIQRTPRGRVLTANAWKHLGLNPPRDVEASQFRLTLEDD.

The tract at residues 1–182 is large ATPase domain (RuvB-L); sequence MSEAARLIAP…FGIPVRLNFY (182 aa). ATP is bound by residues Arg-22, Gly-63, Lys-66, Thr-67, Thr-68, 129 to 131, Arg-172, Tyr-182, and Arg-219; that span reads EDF. Thr-67 provides a ligand contact to Mg(2+). Residues 183-253 are small ATPAse domain (RuvB-S); sequence TVEELELIVR…IADEALTRLL (71 aa). Residues 256-346 form a head domain (RuvB-H) region; that stretch reads SMGLDQLDRR…SQFRLTLEDD (91 aa). Residues Arg-292, Arg-311, and Arg-316 each contribute to the DNA site.

The protein belongs to the RuvB family. Homohexamer. Forms an RuvA(8)-RuvB(12)-Holliday junction (HJ) complex. HJ DNA is sandwiched between 2 RuvA tetramers; dsDNA enters through RuvA and exits via RuvB. An RuvB hexamer assembles on each DNA strand where it exits the tetramer. Each RuvB hexamer is contacted by two RuvA subunits (via domain III) on 2 adjacent RuvB subunits; this complex drives branch migration. In the full resolvosome a probable DNA-RuvA(4)-RuvB(12)-RuvC(2) complex forms which resolves the HJ.

Its subcellular location is the cytoplasm. It carries out the reaction ATP + H2O = ADP + phosphate + H(+). In terms of biological role, the RuvA-RuvB-RuvC complex processes Holliday junction (HJ) DNA during genetic recombination and DNA repair, while the RuvA-RuvB complex plays an important role in the rescue of blocked DNA replication forks via replication fork reversal (RFR). RuvA specifically binds to HJ cruciform DNA, conferring on it an open structure. The RuvB hexamer acts as an ATP-dependent pump, pulling dsDNA into and through the RuvAB complex. RuvB forms 2 homohexamers on either side of HJ DNA bound by 1 or 2 RuvA tetramers; 4 subunits per hexamer contact DNA at a time. Coordinated motions by a converter formed by DNA-disengaged RuvB subunits stimulates ATP hydrolysis and nucleotide exchange. Immobilization of the converter enables RuvB to convert the ATP-contained energy into a lever motion, pulling 2 nucleotides of DNA out of the RuvA tetramer per ATP hydrolyzed, thus driving DNA branch migration. The RuvB motors rotate together with the DNA substrate, which together with the progressing nucleotide cycle form the mechanistic basis for DNA recombination by continuous HJ branch migration. Branch migration allows RuvC to scan DNA until it finds its consensus sequence, where it cleaves and resolves cruciform DNA. The polypeptide is Holliday junction branch migration complex subunit RuvB (Rhizobium meliloti (strain 1021) (Ensifer meliloti)).